Consider the following 466-residue polypeptide: Cysteine--tRNA ligase (466 aa).

Cys-27 is a Zn(2+) binding site. The 'HIGH' region signature appears at 29-39 (PTVYNFFHIGN). Zn(2+) is bound by residues Cys-207, His-232, and Glu-236. The 'KMSKS' region signature appears at 264 to 268 (KMSKS). Lys-267 contacts ATP.

Belongs to the class-I aminoacyl-tRNA synthetase family. In terms of assembly, monomer. Zn(2+) serves as cofactor.

Its subcellular location is the cytoplasm. It catalyses the reaction tRNA(Cys) + L-cysteine + ATP = L-cysteinyl-tRNA(Cys) + AMP + diphosphate. The sequence is that of Cysteine--tRNA ligase from Clostridium beijerinckii (strain ATCC 51743 / NCIMB 8052) (Clostridium acetobutylicum).